The sequence spans 248 residues: Type II methyltransferase M.AquIA (248 aa).

The SAM-dependent MTase C5-type domain occupies 3 to 248; sequence KKLISLFSGA…IKDRIKNHGY (246 aa). Cys-82 is an active-site residue.

This sequence belongs to the class I-like SAM-binding methyltransferase superfamily. C5-methyltransferase family. As to quaternary structure, heterodimer of an alpha and a beta subunit.

It carries out the reaction a 2'-deoxycytidine in DNA + S-adenosyl-L-methionine = a 5-methyl-2'-deoxycytidine in DNA + S-adenosyl-L-homocysteine + H(+). A methylase, recognizes the double-stranded sequence 5'-CYCGRG-3', methylates C-1 on both strands, and protects the DNA from cleavage by the AquI endonuclease. The polypeptide is Type II methyltransferase M.AquIA (aquIMA) (Picosynechococcus sp. (strain ATCC 27264 / PCC 7002 / PR-6) (Agmenellum quadruplicatum)).